Consider the following 542-residue polypeptide: MESQRNILLIGLLFVSFLMWQQWQTDKAPKPATAQTVTQTNAASQHSADVPEADISGVPVELPANKNLISVKTDQLDIKISPIGGDIVYAALVEHKREIDSSDPFVILEQKNNFTYIAQSGLIGRDGIDSSANGRAAYSVQTNSYSLADGKDTLTVPFTYTADNGVTYVKSFTFTRGQYDVGVDYSISNTSAAPLQVQMYGQIKQTIKESESSMMMPTYRGGAFSAQDTRYEKYNFDDMADKNLAKVTLGGWAAMLQHYFVSAWVPPATDSNTIFSSMSAGGMANIGFRGAVYDIAPGATQEINSQFYVGPKNQKELSAISETLNLVVDYGFLWWLAIPIHWLLMFYQSFVGNWGVAIILITLTVRGGLYPLTKKQYTSMAKMRNLQPKLTEMKERFGDDRQKMGQAMMELYKKEKVNPMGGCLPILLQMPIFIALYWVLLESYELRHAPFMLWITDLSVQDPYYVLPLLMGLSMFLMQKMQPVAPTMDPMQVKMMQWMPVIFTVFFLWFPAGLVLYWLVGNLVAITQQKIIYAGLEKNGIK.

6 consecutive transmembrane segments (helical) span residues 6–26 (NILLIGLLFVSFLMWQQWQTD), 326–346 (LVVDYGFLWWLAIPIHWLLMF), 350–370 (FVGNWGVAIILITLTVRGGLY), 421–441 (GGCLPILLQMPIFIALYWVLL), 458–478 (LSVQDPYYVLPLLMGLSMFLM), and 501–521 (VIFTVFFLWFPAGLVLYWLVG).

The protein belongs to the OXA1/ALB3/YidC family. Type 1 subfamily. As to quaternary structure, interacts with the Sec translocase complex via SecD. Specifically interacts with transmembrane segments of nascent integral membrane proteins during membrane integration.

It localises to the cell inner membrane. In terms of biological role, required for the insertion and/or proper folding and/or complex formation of integral membrane proteins into the membrane. Involved in integration of membrane proteins that insert both dependently and independently of the Sec translocase complex, as well as at least some lipoproteins. Aids folding of multispanning membrane proteins. This chain is Membrane protein insertase YidC, found in Shewanella frigidimarina (strain NCIMB 400).